A 630-amino-acid chain; its full sequence is MNLNLDSAKDTLCKNILIYGYCKFENKGCAFSHHKPNVGQPPVSASSSSGYSGNSSPAEAKRKFNLNTPSFQPSNVQNITSKFAALSPKVKEIPVFVPSGGSGGAANTPNNGADANELLSQKKFNASTPSFMPAGFGSEYPSSPNTSGAGQPPNPYLTGNGHPASMAQSSGADVYYQQQAASYPLQYHLYAPAPPPRLTIPLPPHETNANSMFIPNDLRETLQKKNEATLQTLPRSNLPEHINIYHSLVPIDKSYDPKSKVWDVPSSLYKVFSSVDGNPYALRKIELNFPIINEAPFKTIKKWRSVKNANVTQLQEAFTSMAFGKSCLVVVYDYFPNSSTLIDHHKRIGTRTEPITEDLLWNYLVQLVNALMAIHAKGLAARSALDLTKIIVTNKNRIRLSNLAISDILNFEKDEEEISKSNRYFQGLQREDIKKLGRILLSLSTLTIPNTLRNNDTGELLRHLKTSSTISFSDEFIQVLTVLNEDTVEFDLDRFSQRYLTTRLFSTINNLEDSTDFMESQITTELENARLFRLLTKLNFIIDRPEAKDWTENSNKYIIKLFRDYIFFQHDEYGKPVVDLSRVLTNLNKLDAGIDEKFLLVSRDEKNCIIVSYKEIRDTIDSVFRNLTRD.

The C3H1-type zinc finger occupies 7–36 (SAKDTLCKNILIYGYCKFENKGCAFSHHKP). Disordered stretches follow at residues 38 to 72 (VGQP…PSFQ) and 135 to 171 (GFGS…QSSG). Residues 44-56 (SASSSSGYSGNSS) show a composition bias toward low complexity. The segment covering 140-149 (YPSSPNTSGA) has biased composition (polar residues). The pseudokinase domain stretch occupies residues 231-501 (QTLPRSNLPE…LDRFSQRYLT (271 aa)). ATP-binding positions include arginine 283, 333–340 (DYFPNSST), and 388–389 (TK). Residues 502-540 (TRLFSTINNLEDSTDFMESQITTELENARLFRLLTKLNF) are a coiled coil. The knob domain stretch occupies residues 541–630 (IIDRPEAKDW…DSVFRNLTRD (90 aa)).

Belongs to the protein kinase superfamily. PAN3 family. As to quaternary structure, homodimer. Forms a heterotrimer with a catalytic subunit PAN2 to form the poly(A)-nuclease (PAN) deadenylation complex. Interacts (via PAM-2 motif) with poly(A)-binding protein PAB1 (via PABC domain), conferring substrate specificity of the enzyme complex.

The protein resides in the cytoplasm. Regulatory subunit of the poly(A)-nuclease (PAN) deadenylation complex, one of two cytoplasmic mRNA deadenylases involved in mRNA turnover. PAN specifically shortens poly(A) tails of RNA and the activity is stimulated by poly(A)-binding protein PAB1. PAN deadenylation is followed by rapid degradation of the shortened mRNA tails by the CCR4-NOT complex. Deadenylated mRNAs are then degraded by two alternative mechanisms, namely exosome-mediated 3'-5' exonucleolytic degradation, or deadenylation-dependent mRNA decaping and subsequent 5'-3' exonucleolytic degradation by XRN1. May also be involved in post-transcriptional maturation of mRNA poly(A) tails. PAN3 acts as a positive regulator for PAN activity, recruiting the catalytic subunit PAN2 to mRNA via its interaction with RNA and with PAB1. The polypeptide is PAN2-PAN3 deadenylation complex subunit PAN3 (Scheffersomyces stipitis (strain ATCC 58785 / CBS 6054 / NBRC 10063 / NRRL Y-11545) (Yeast)).